A 956-amino-acid chain; its full sequence is MAM domain-containing glycosylphosphatidylinositol anchor protein 1 (956 aa).

A signal peptide spans 1 to 18 (MEVTCLLLLALIPFHCRG). Ig-like domains lie at 24-123 (PAQA…KSIR) and 132-230 (PVLT…KSIT). Asparagine 42 carries N-linked (GlcNAc...) asparagine glycosylation. Disulfide bonds link cysteine 60-cysteine 108 and cysteine 157-cysteine 214. N-linked (GlcNAc...) asparagine glycosylation is found at asparagine 235, asparagine 257, and asparagine 307. Ig-like domains are found at residues 240–323 (PTLK…KTVN), 338–432 (PDMI…VEVN), 440–534 (PTIS…VQLT), and 539–632 (PEVE…FQVS). Intrachain disulfides connect cysteine 262-cysteine 308, cysteine 357-cysteine 415, cysteine 463-cysteine 514, and cysteine 560-cysteine 616. One can recognise a Fibronectin type-III domain in the interval 644–744 (TPNPTRSHKL…SRVIHYTEPI (101 aa)). Residues 752-919 (NTCHFEDEKI…VTLKKGECPR (168 aa)) form the MAM domain. Residues 780 to 789 (LTQNPKRSPN) are compositionally biased toward polar residues. Residues 780 to 799 (LTQNPKRSPNTGPPTDISGT) form a disordered region. The GPI-anchor amidated serine moiety is linked to residue serine 933. The propeptide at 934-956 (GAPRLSSLQLWGSMTIFLLALQR) is removed in mature form.

Interacts heterophilically through its MAM domain with proteins in axon-rich regions and through its Ig-like domains with proteins in differentiating muscle. Interacts (through the Ig-like domains) with NLGN2. High levels detected in developing central and peripheral nervous systems with little expression elsewhere. In brain, highest levels in cerebral cortex and hindbrain at E15. At postnatal day 1, highest levels in basilar pons and superficial layers of the neocortex. In the developing spinal cord, restricted to a subpopulation of neurons in the dorsal and spinal ventral cord, probably D1 interneurons. Expressed in brain.

It is found in the cell membrane. In terms of biological role, required for radial migration of cortical neurons in the superficial layer of the neocortex. Plays a role in the formation or maintenance of inhibitory synapses. May function by inhibiting the activity of NLGN2. The sequence is that of MAM domain-containing glycosylphosphatidylinositol anchor protein 1 (Mdga1) from Rattus norvegicus (Rat).